We begin with the raw amino-acid sequence, 566 residues long: Urease subunit alpha (566 aa).

A Urease domain is found at 129–566 (GGVDTHIHFI…LPLAQRYFLF (438 aa)). Residues histidine 134, histidine 136, and lysine 217 each contribute to the Ni(2+) site. Position 217 is an N6-carboxylysine (lysine 217). Residue histidine 219 coordinates substrate. Ni(2+) contacts are provided by histidine 246 and histidine 272. Histidine 320 acts as the Proton donor in catalysis. Ni(2+) is bound at residue aspartate 360.

Belongs to the metallo-dependent hydrolases superfamily. Urease alpha subunit family. In terms of assembly, heterotrimer of UreA (gamma), UreB (beta) and UreC (alpha) subunits. Three heterotrimers associate to form the active enzyme. It depends on Ni cation as a cofactor. In terms of processing, carboxylation allows a single lysine to coordinate two nickel ions.

It is found in the cytoplasm. The enzyme catalyses urea + 2 H2O + H(+) = hydrogencarbonate + 2 NH4(+). Its pathway is nitrogen metabolism; urea degradation; CO(2) and NH(3) from urea (urease route): step 1/1. This chain is Urease subunit alpha, found in Janthinobacterium sp. (strain Marseille) (Minibacterium massiliensis).